Reading from the N-terminus, the 200-residue chain is Small ribosomal subunit protein uS5 (200 aa).

Over residues 1-22 (MAEERGEKRGRRRDRENPRDRD) the composition is skewed to basic and acidic residues. The tract at residues 1-26 (MAEERGEKRGRRRDRENPRDRDDESS) is disordered. Residues 28–91 (LVDKLVGINR…EEAKRNLVRI (64 aa)) enclose the S5 DRBM domain.

The protein belongs to the universal ribosomal protein uS5 family. Part of the 30S ribosomal subunit. Contacts proteins S4 and S8.

With S4 and S12 plays an important role in translational accuracy. In terms of biological role, located at the back of the 30S subunit body where it stabilizes the conformation of the head with respect to the body. In Hyphomonas neptunium (strain ATCC 15444), this protein is Small ribosomal subunit protein uS5.